The sequence spans 460 residues: MQEINRDAQTIAAVATAVAPGQGGIAVIRLSGPQAQAAVQSVTRIPGQQSWESHRVLYGHVLAGESGERIDEVLVLLMLAPRSFTGEDVVEIHCHGGVIAVQRVLARVLDQPGVRRALPGEFSQRAVLNGRLDLTRAEAISDLVAARSQRAAELAMAGVDGGIQKRITALRDRLLDQLSELEARVDFEEDLPALDGAALLEELQRVRGALQQLVKDGQVGAALRQGLRVALVGRPNVGKSSLLNRLSRRERAIVTDLPGTTRDLLESEIVLEGVPITLLDTAGIRATSDAVERLGIARSHDALASADLVLLLFDLSVGWTPDDEALRQRIPAAVPHLLVGNKVDVAVSDARAGTSGSAADIRLSASTGAGEAELVQAVLERCGALADGSLLLSLNQRQGDLAQQAADALARSAQVAADGLPWDFWTIDLRQAIHSLGEITGEELTESVLDRIFSRFCIGK.

(6S)-5-formyl-5,6,7,8-tetrahydrofolate contacts are provided by R29, E91, and R131. A TrmE-type G domain is found at G226–G383. Residue N236 coordinates K(+). GTP-binding positions include N236–S241, T255–T261, and D280–G283. S240 is a Mg(2+) binding site. 3 residues coordinate K(+): T255, L257, and T260. T261 contacts Mg(2+). K460 is a (6S)-5-formyl-5,6,7,8-tetrahydrofolate binding site.

It belongs to the TRAFAC class TrmE-Era-EngA-EngB-Septin-like GTPase superfamily. TrmE GTPase family. As to quaternary structure, homodimer. Heterotetramer of two MnmE and two MnmG subunits. Requires K(+) as cofactor.

It is found in the cytoplasm. Exhibits a very high intrinsic GTPase hydrolysis rate. Involved in the addition of a carboxymethylaminomethyl (cmnm) group at the wobble position (U34) of certain tRNAs, forming tRNA-cmnm(5)s(2)U34. This chain is tRNA modification GTPase MnmE, found in Synechococcus sp. (strain WH7803).